The primary structure comprises 188 residues: F-box only protein 36 (188 aa).

One can recognise an F-box domain in the interval 91-137 (FDFLERLSDDLLLTIISYLDLEDIARLCQTSHRFAKLCMSDKLWEQI).

Directly interacts with SKP1 and CUL1.

Substrate-recognition component of the SCF (SKP1-CUL1-F-box protein)-type E3 ubiquitin ligase complex. The protein is F-box only protein 36 (FBXO36) of Homo sapiens (Human).